A 76-amino-acid polypeptide reads, in one-letter code: uncharacterized protein (76 aa).

It localises to the plastid. This is an uncharacterized protein from Euglena longa (Euglenophycean alga).